The chain runs to 30 residues: Ornithine carbamoyltransferase, catabolic (30 aa).

It belongs to the aspartate/ornithine carbamoyltransferase superfamily. OTCase family.

The protein resides in the cytoplasm. The enzyme catalyses carbamoyl phosphate + L-ornithine = L-citrulline + phosphate + H(+). The protein operates within amino-acid degradation; L-arginine degradation via ADI pathway; carbamoyl phosphate from L-arginine: step 2/2. This chain is Ornithine carbamoyltransferase, catabolic (arcB), found in Aeromonas caviae (Aeromonas punctata).